Here is an 82-residue protein sequence, read N- to C-terminus: Sec-independent protein translocase protein TatA (82 aa).

The helical transmembrane segment at 1–21 (MHPPSITQLLIILLIIVLLFG) threads the bilayer. Positions 42–82 (AVKEDEEDNQSEENTKSQIKQSESKNENVSKTHTDSQKQDT) are disordered. Basic and acidic residues predominate over residues 63 to 82 (SESKNENVSKTHTDSQKQDT).

Belongs to the TatA/E family. As to quaternary structure, the Tat system comprises two distinct complexes: a TatABC complex, containing multiple copies of TatA, TatB and TatC subunits, and a separate TatA complex, containing only TatA subunits. Substrates initially bind to the TatABC complex, which probably triggers association of the separate TatA complex to form the active translocon.

The protein localises to the cell inner membrane. Functionally, part of the twin-arginine translocation (Tat) system that transports large folded proteins containing a characteristic twin-arginine motif in their signal peptide across membranes. TatA could form the protein-conducting channel of the Tat system. The chain is Sec-independent protein translocase protein TatA from Helicobacter hepaticus (strain ATCC 51449 / 3B1).